Reading from the N-terminus, the 766-residue chain is AMP deaminase 3 (766 aa).

Phosphoserine is present on residues S85 and S107. The disordered stretch occupies residues 89–114 (QMPTQQDWKGPPTASPAMSPATPLVP). Positions 99–110 (PPTASPAMSPAT) are enriched in low complexity. Residues H316 and H318 each contribute to the Zn(2+) site. Residues H318 and 387 to 392 (KFNSKY) each bind substrate. Zn(2+) is bound at residue H585. E588 lines the substrate pocket. H607 acts as the Proton acceptor in catalysis. Residue D662 participates in Zn(2+) binding. 663–666 (DPMQ) lines the substrate pocket.

This sequence belongs to the metallo-dependent hydrolases superfamily. Adenosine and AMP deaminases family. As to quaternary structure, homotetramer. It depends on Zn(2+) as a cofactor. Found in heart, lung brain, spleen, kidney and to a lesser extent in liver.

The enzyme catalyses AMP + H2O + H(+) = IMP + NH4(+). Its pathway is purine metabolism; IMP biosynthesis via salvage pathway; IMP from AMP: step 1/1. Functionally, AMP deaminase plays a critical role in energy metabolism. The polypeptide is AMP deaminase 3 (Mus musculus (Mouse)).